Consider the following 1237-residue polypeptide: Putative structural protein VP3 (1237 aa).

Residues 963–1178 form the PPPDE domain; sequence GFLDKRVGDA…WDVSTAARMQ (216 aa). Residues histidine 1001 and cysteine 1149 contribute to the active site.

It localises to the virion. This Lymantria dispar cypovirus 1 (isolate Rao) (LdCPV-1) protein is Putative structural protein VP3 (S3).